The sequence spans 36 residues: Cytochrome b6-f complex subunit 7 (36 aa).

The chain crosses the membrane as a helical span at residues 5–25 (IFFVAGLVFVLTLVGMAIGFG).

This sequence belongs to the PetM family. The 4 large subunits of the cytochrome b6-f complex are cytochrome b6, subunit IV (17 kDa polypeptide, PetD), cytochrome f and the Rieske protein, while the 4 small subunits are PetG, PetL, PetM and PetN. The complex functions as a dimer.

It localises to the cell inner membrane. Functionally, component of the cytochrome b6-f complex, which mediates electron transfer between photosystem II (PSII) and photosystem I (PSI), cyclic electron flow around PSI, and state transitions. The sequence is that of Cytochrome b6-f complex subunit 7 from Gloeobacter violaceus (strain ATCC 29082 / PCC 7421).